A 356-amino-acid chain; its full sequence is tRNA N6-adenosine threonylcarbamoyltransferase (356 aa).

His115 and His119 together coordinate Fe cation. Residues 138-142 (LVSGG), Asp171, Gly184, and Asn283 contribute to the substrate site. Residue Asp311 participates in Fe cation binding.

This sequence belongs to the KAE1 / TsaD family. Fe(2+) serves as cofactor.

It is found in the cytoplasm. It catalyses the reaction L-threonylcarbamoyladenylate + adenosine(37) in tRNA = N(6)-L-threonylcarbamoyladenosine(37) in tRNA + AMP + H(+). In terms of biological role, required for the formation of a threonylcarbamoyl group on adenosine at position 37 (t(6)A37) in tRNAs that read codons beginning with adenine. Is involved in the transfer of the threonylcarbamoyl moiety of threonylcarbamoyl-AMP (TC-AMP) to the N6 group of A37, together with TsaE and TsaB. TsaD likely plays a direct catalytic role in this reaction. This chain is tRNA N6-adenosine threonylcarbamoyltransferase, found in Prochlorococcus marinus subsp. pastoris (strain CCMP1986 / NIES-2087 / MED4).